The chain runs to 182 residues: HGPRTase-like protein 1 (182 aa).

This sequence belongs to the purine/pyrimidine phosphoribosyltransferase family. Archaeal HPRT subfamily.

May catalyze a purine salvage reaction, the substrate is unknown. The chain is HGPRTase-like protein 1 from Haloarcula marismortui (strain ATCC 43049 / DSM 3752 / JCM 8966 / VKM B-1809) (Halobacterium marismortui).